The chain runs to 263 residues: Eukaryotic translation initiation factor 3 subunit J-B (263 aa).

Low complexity predominate over residues 1-13; the sequence is MAAAAAAAAAAAA. The disordered stretch occupies residues 1 to 115; that stretch reads MAAAAAAAAA…EPEESKVLTP (115 aa). Ala-2 bears the N-acetylalanine mark. The segment at 6 to 74 is sufficient for interaction with EIF3B; it reads AAAAAAAAGD…KEEAEVKPEV (69 aa). Phosphoserine occurs at positions 16, 18, and 25. Acidic residues predominate over residues 45 to 66; it reads EGEDEDEDVKDNWDDDDDENKE. Over residues 67-111 the composition is skewed to basic and acidic residues; that stretch reads EAEVKPEVKISEKKKIAEKIKEKERQQKKRQEEIKKRLEEPEESK. Positions 75 to 140 form a coiled coil; the sequence is KISEKKKIAE…ESDLELAKET (66 aa). Lys-111 participates in a covalent cross-link: Glycyl lysine isopeptide (Lys-Gly) (interchain with G-Cter in SUMO2). The residue at position 114 (Thr-114) is a Phosphothreonine. The residue at position 132 (Ser-132) is a Phosphoserine. A promotes stable association with the 40S ribosome region spans residues 248–263; sequence YGGYEGGYVQDYEDFM. Tyr-259 carries the phosphotyrosine modification.

The protein belongs to the eIF-3 subunit J family. Component of the eukaryotic translation initiation factor 3 (eIF-3) complex, which is composed of 13 subunits: EIF3A, EIF3B, EIF3C, EIF3D, EIF3E, EIF3F, EIF3G, EIF3H, EIF3I, EIF3J, EIF3K, EIF3L and EIF3M. The eIF-3 complex appears to include 3 stable modules: module A is composed of EIF3A, EIF3B, EIF3G and EIF3I; module B is composed of EIF3F, EIF3H, and EIF3M; and module C is composed of EIF3C, EIF3D, EIF3E, EIF3K and EIF3L. EIF3C of module C binds EIF3B of module A and EIF3H of module B, thereby linking the three modules. EIF3J is a labile subunit that binds to the eIF-3 complex via EIF3B. The eIF-3 complex interacts with RPS6KB1 under conditions of nutrient depletion. Mitogenic stimulation leads to binding and activation of a complex composed of MTOR and RPTOR, leading to phosphorylation and release of RPS6KB1 and binding of EIF4B to eIF-3. Phosphorylated. Phosphorylation is enhanced upon serum stimulation.

The protein localises to the cytoplasm. Component of the eukaryotic translation initiation factor 3 (eIF-3) complex, which is required for several steps in the initiation of protein synthesis. The eIF-3 complex associates with the 40S ribosome and facilitates the recruitment of eIF-1, eIF-1A, eIF-2:GTP:methionyl-tRNAi and eIF-5 to form the 43S pre-initiation complex (43S PIC). The eIF-3 complex stimulates mRNA recruitment to the 43S PIC and scanning of the mRNA for AUG recognition. The eIF-3 complex is also required for disassembly and recycling of post-termination ribosomal complexes and subsequently prevents premature joining of the 40S and 60S ribosomal subunits prior to initiation. The eIF-3 complex specifically targets and initiates translation of a subset of mRNAs involved in cell proliferation, including cell cycling, differentiation and apoptosis, and uses different modes of RNA stem-loop binding to exert either translational activation or repression. This subunit binds directly within the mRNA entry channel of the 40S ribosome to the aminoacyl (A) site. It may regulate the interaction between the 43S PIC and mRNA. In Mus musculus (Mouse), this protein is Eukaryotic translation initiation factor 3 subunit J-B (Eif3j2).